Reading from the N-terminus, the 369-residue chain is Phenylalanine--tRNA ligase alpha subunit (369 aa).

Glutamate 269 is a Mg(2+) binding site.

Belongs to the class-II aminoacyl-tRNA synthetase family. Phe-tRNA synthetase alpha subunit type 1 subfamily. In terms of assembly, tetramer of two alpha and two beta subunits. The cofactor is Mg(2+).

The protein localises to the cytoplasm. It catalyses the reaction tRNA(Phe) + L-phenylalanine + ATP = L-phenylalanyl-tRNA(Phe) + AMP + diphosphate + H(+). This chain is Phenylalanine--tRNA ligase alpha subunit, found in Brucella canis (strain ATCC 23365 / NCTC 10854 / RM-666).